A 442-amino-acid polypeptide reads, in one-letter code: tRNA modification GTPase MnmE (442 aa).

(6S)-5-formyl-5,6,7,8-tetrahydrofolate-binding residues include R23, E82, and K121. The TrmE-type G domain occupies 215–364 (GTSLILAGKP…VKQALIQWMQ (150 aa)). Residue N225 coordinates K(+). Residues 225–230 (NVGKSS), 244–250 (THIPGTT), 269–272 (DTAG), and 325–328 (NKAD) each bind GTP. A Mg(2+)-binding site is contributed by S229. T244, I246, and T249 together coordinate K(+). T250 is a binding site for Mg(2+). K442 is a binding site for (6S)-5-formyl-5,6,7,8-tetrahydrofolate.

It belongs to the TRAFAC class TrmE-Era-EngA-EngB-Septin-like GTPase superfamily. TrmE GTPase family. Homodimer. Heterotetramer of two MnmE and two MnmG subunits. K(+) is required as a cofactor.

It localises to the cytoplasm. Functionally, exhibits a very high intrinsic GTPase hydrolysis rate. Involved in the addition of a carboxymethylaminomethyl (cmnm) group at the wobble position (U34) of certain tRNAs, forming tRNA-cmnm(5)s(2)U34. The protein is tRNA modification GTPase MnmE of Chlamydia pneumoniae (Chlamydophila pneumoniae).